A 600-amino-acid chain; its full sequence is Jacalin-related lectin 18 (600 aa).

4 Jacalin-type lectin domains span residues 12–158 (TQRL…YFTC), 161–303 (PTRM…YFTT), 304–447 (SPFI…YFRL), and 454–597 (GEKV…HVLP).

Belongs to the jacalin lectin family.

The chain is Jacalin-related lectin 18 (JAL18) from Arabidopsis thaliana (Mouse-ear cress).